We begin with the raw amino-acid sequence, 262 residues long: Lens fiber major intrinsic protein (262 aa).

Residues 1–9 (MRELRSSSF) are Cytoplasmic-facing. A helical transmembrane segment spans residues 10–29 (WRAILAEFLGSLLYTLLGLG). Over 30-41 (ASLRWAPGPHGV) the chain is Extracellular. The chain crosses the membrane as a helical span at residues 42–59 (LGSALAFGLAQATLVQAL). At 60 to 61 (GH) the chain is on the cytoplasmic side. The discontinuously helical intramembrane region spans 62–77 (VSGGHINPAITLAFLL). Residues 68–70 (NPA) carry the NPA 1 motif. Topologically, residues 78–82 (ASQLS) are cytoplasmic. A helical membrane pass occupies residues 83-106 (LPRALGYLLAQLLGALAGAGVLYG). At 107-127 (VTPAAVRGTLGLSALHPSVGP) the chain is on the extracellular side. Residues 128-148 (GQGTVVELLLTAQFILCVFAS) traverse the membrane as a helical segment. The Cytoplasmic segment spans residues 149–156 (FDDRHDGR). Residues 157–175 (PGSAALPVGFSLALGHLFG) traverse the membrane as a helical segment. Residues 176–178 (IPF) are Extracellular-facing. The discontinuously helical intramembrane region spans 179–193 (TGAGMNPARSFAPAV). The NPA 2 signature appears at 184-186 (NPA). The Extracellular segment spans residues 194–200 (ITRNFTN). The helical transmembrane segment at 201-222 (HWVFWAGPLLGAALAALLYELA) threads the bilayer. Topologically, residues 223 to 262 (LCPRARSMAERLAVLRGEPPAAAPPPEPPAEPLELKTQGL) are cytoplasmic. The segment at 227–237 (ARSMAERLAVL) is interaction with CALM. Residues 240 to 262 (EPPAAAPPPEPPAEPLELKTQGL) form a disordered region. Pro residues predominate over residues 243–253 (AAAPPPEPPAE).

It belongs to the MIP/aquaporin (TC 1.A.8) family. Homotetramer; each monomer provides an independent water pore. Two homotetramers on opposing membranes can dimerize, forming a cell-cell junction. Interacts with CALM; the calcium-calmodulin/CALM complex interacts with the cytoplasmic domains of two aquaporins, leading to channel closure. During early stages of lens development, interacts through its C-terminal region with Cx56 and GJA8/Cx45.6. In terms of tissue distribution, major component of lens fiber gap junctions.

The protein resides in the cell membrane. Its subcellular location is the cell junction. It carries out the reaction H2O(in) = H2O(out). The water channel activity is inhibited by calcium through calmodulin/CALM. Aquaporins form homotetrameric transmembrane channels, with each monomer independently mediating water transport across the plasma membrane along its osmotic gradient. Specifically expressed in lens fiber cells, this aquaporin is crucial for maintaining lens water homeostasis and transparency. Beyond water permeability, it also acts as a cell-to-cell adhesion molecule, forming thin junctions between lens fiber cells that are essential for maintaining the ordered structure and transparency of the lens. The sequence is that of Lens fiber major intrinsic protein from Gallus gallus (Chicken).